Consider the following 504-residue polypeptide: Cytochrome P450 2K4 (504 aa).

Cys447 provides a ligand contact to heme.

This sequence belongs to the cytochrome P450 family. Heme is required as a cofactor.

Its subcellular location is the endoplasmic reticulum membrane. The protein localises to the microsome membrane. It carries out the reaction an organic molecule + reduced [NADPH--hemoprotein reductase] + O2 = an alcohol + oxidized [NADPH--hemoprotein reductase] + H2O + H(+). In Oncorhynchus mykiss (Rainbow trout), this protein is Cytochrome P450 2K4 (cyp2k4).